A 536-amino-acid polypeptide reads, in one-letter code: Chaperonin GroEL (536 aa).

Residues 29–32, 86–90, glycine 412, and aspartate 493 contribute to the ATP site; these read TLGP and DGTTT.

It belongs to the chaperonin (HSP60) family. In terms of assembly, forms a cylinder of 14 subunits composed of two heptameric rings stacked back-to-back. Interacts with the co-chaperonin GroES.

It localises to the cytoplasm. The enzyme catalyses ATP + H2O + a folded polypeptide = ADP + phosphate + an unfolded polypeptide.. Its function is as follows. Together with its co-chaperonin GroES, plays an essential role in assisting protein folding. The GroEL-GroES system forms a nano-cage that allows encapsulation of the non-native substrate proteins and provides a physical environment optimized to promote and accelerate protein folding. The chain is Chaperonin GroEL from Aster yellows witches'-broom phytoplasma (strain AYWB).